A 219-amino-acid polypeptide reads, in one-letter code: Phosphatidylserine decarboxylase proenzyme (219 aa).

Ser-188 (schiff-base intermediate with substrate; via pyruvic acid) is an active-site residue. Position 188 is a pyruvic acid (Ser); by autocatalysis (Ser-188).

Belongs to the phosphatidylserine decarboxylase family. PSD-A subfamily. Heterodimer of a large membrane-associated beta subunit and a small pyruvoyl-containing alpha subunit. The cofactor is pyruvate. Post-translationally, is synthesized initially as an inactive proenzyme. Formation of the active enzyme involves a self-maturation process in which the active site pyruvoyl group is generated from an internal serine residue via an autocatalytic post-translational modification. Two non-identical subunits are generated from the proenzyme in this reaction, and the pyruvate is formed at the N-terminus of the alpha chain, which is derived from the carboxyl end of the proenzyme. The post-translation cleavage follows an unusual pathway, termed non-hydrolytic serinolysis, in which the side chain hydroxyl group of the serine supplies its oxygen atom to form the C-terminus of the beta chain, while the remainder of the serine residue undergoes an oxidative deamination to produce ammonia and the pyruvoyl prosthetic group on the alpha chain.

It is found in the cell membrane. The enzyme catalyses a 1,2-diacyl-sn-glycero-3-phospho-L-serine + H(+) = a 1,2-diacyl-sn-glycero-3-phosphoethanolamine + CO2. It functions in the pathway phospholipid metabolism; phosphatidylethanolamine biosynthesis; phosphatidylethanolamine from CDP-diacylglycerol: step 2/2. Its function is as follows. Catalyzes the formation of phosphatidylethanolamine (PtdEtn) from phosphatidylserine (PtdSer). The polypeptide is Phosphatidylserine decarboxylase proenzyme (Geobacter sp. (strain M21)).